The chain runs to 356 residues: Phospho-N-acetylmuramoyl-pentapeptide-transferase (356 aa).

A run of 10 helical transmembrane segments spans residues 27–47 (ATLM…INML), 73–93 (TMGG…WMDL), 97–117 (FVWA…LDDL), 138–158 (FLVA…WLYV), 165–185 (AIPL…GAGN), 195–215 (GLAI…AYLA), 232–252 (AGEL…FLWF), 258–278 (AVFM…AIAV), 284–304 (IVLA…IIQV), and 333–353 (KVVI…LATL).

The protein belongs to the glycosyltransferase 4 family. MraY subfamily. Mg(2+) serves as cofactor.

It is found in the cell inner membrane. It carries out the reaction UDP-N-acetyl-alpha-D-muramoyl-L-alanyl-gamma-D-glutamyl-meso-2,6-diaminopimeloyl-D-alanyl-D-alanine + di-trans,octa-cis-undecaprenyl phosphate = di-trans,octa-cis-undecaprenyl diphospho-N-acetyl-alpha-D-muramoyl-L-alanyl-D-glutamyl-meso-2,6-diaminopimeloyl-D-alanyl-D-alanine + UMP. Its pathway is cell wall biogenesis; peptidoglycan biosynthesis. Catalyzes the initial step of the lipid cycle reactions in the biosynthesis of the cell wall peptidoglycan: transfers peptidoglycan precursor phospho-MurNAc-pentapeptide from UDP-MurNAc-pentapeptide onto the lipid carrier undecaprenyl phosphate, yielding undecaprenyl-pyrophosphoryl-MurNAc-pentapeptide, known as lipid I. The sequence is that of Phospho-N-acetylmuramoyl-pentapeptide-transferase from Erythrobacter litoralis (strain HTCC2594).